The sequence spans 689 residues: tRNA 5-methylaminomethyl-2-thiouridine biosynthesis bifunctional protein MnmC (689 aa).

Residues 1 to 245 are tRNA (mnm(5)s(2)U34)-methyltransferase; the sequence is MNQRPIQTAT…KREMLTGTLP (245 aa). The segment at 270–689 is FAD-dependent cmnm(5)s(2)U34 oxidoreductase; the sequence is IGGGIVSALT…RSPATQESSR (420 aa).

It in the N-terminal section; belongs to the methyltransferase superfamily. tRNA (mnm(5)s(2)U34)-methyltransferase family. This sequence in the C-terminal section; belongs to the DAO family. It depends on FAD as a cofactor.

It is found in the cytoplasm. It carries out the reaction 5-aminomethyl-2-thiouridine(34) in tRNA + S-adenosyl-L-methionine = 5-methylaminomethyl-2-thiouridine(34) in tRNA + S-adenosyl-L-homocysteine + H(+). Its function is as follows. Catalyzes the last two steps in the biosynthesis of 5-methylaminomethyl-2-thiouridine (mnm(5)s(2)U) at the wobble position (U34) in tRNA. Catalyzes the FAD-dependent demodification of cmnm(5)s(2)U34 to nm(5)s(2)U34, followed by the transfer of a methyl group from S-adenosyl-L-methionine to nm(5)s(2)U34, to form mnm(5)s(2)U34. The polypeptide is tRNA 5-methylaminomethyl-2-thiouridine biosynthesis bifunctional protein MnmC (Yersinia pseudotuberculosis serotype I (strain IP32953)).